Reading from the N-terminus, the 314-residue chain is Homoserine kinase (314 aa).

95-105 (PHSRGLGSSAS) serves as a coordination point for ATP.

The protein belongs to the GHMP kinase family. Homoserine kinase subfamily.

Its subcellular location is the cytoplasm. The enzyme catalyses L-homoserine + ATP = O-phospho-L-homoserine + ADP + H(+). It participates in amino-acid biosynthesis; L-threonine biosynthesis; L-threonine from L-aspartate: step 4/5. Its function is as follows. Catalyzes the ATP-dependent phosphorylation of L-homoserine to L-homoserine phosphate. This chain is Homoserine kinase, found in Rhodococcus erythropolis (strain PR4 / NBRC 100887).